A 305-amino-acid polypeptide reads, in one-letter code: N-acetylmuramic acid 6-phosphate etherase (305 aa).

Residues 1 to 24 are disordered; that stretch reads MTTPPSSPLSDPRRTEGVHPTHTD. Residues 11-24 are compositionally biased toward basic and acidic residues; sequence DPRRTEGVHPTHTD. In terms of domain architecture, SIS spans 62–225; that stretch reads ALPRLERGGR…SSALMVRLGK (164 aa). Glu-90 serves as the catalytic Proton donor. The active site involves Glu-121.

The protein belongs to the GCKR-like family. MurNAc-6-P etherase subfamily. In terms of assembly, homodimer.

It catalyses the reaction N-acetyl-D-muramate 6-phosphate + H2O = N-acetyl-D-glucosamine 6-phosphate + (R)-lactate. The protein operates within amino-sugar metabolism; N-acetylmuramate degradation. In terms of biological role, specifically catalyzes the cleavage of the D-lactyl ether substituent of MurNAc 6-phosphate, producing GlcNAc 6-phosphate and D-lactate. The chain is N-acetylmuramic acid 6-phosphate etherase from Deinococcus geothermalis (strain DSM 11300 / CIP 105573 / AG-3a).